The chain runs to 31 residues: VAILGAAGGIGQPLSLLMKDDLFNINAGIVK.

NAD(+) is bound by residues Gly9–Lys19 and Asp20–Lys31.

It belongs to the LDH/MDH superfamily. MDH type 1 family. Homodimer.

It localises to the mitochondrion matrix. The enzyme catalyses (S)-malate + NAD(+) = oxaloacetate + NADH + H(+). The sequence is that of Malate dehydrogenase, mitochondrial from Imperata cylindrica (Cogon grass).